The chain runs to 87 residues: uncharacterized protein (87 aa).

A helical transmembrane segment spans residues 29–49; that stretch reads ILWMIIFVVIIAVIIYILISP.

It is found in the membrane. This is an uncharacterized protein from Methanocaldococcus jannaschii (strain ATCC 43067 / DSM 2661 / JAL-1 / JCM 10045 / NBRC 100440) (Methanococcus jannaschii).